A 194-amino-acid polypeptide reads, in one-letter code: Ribosome maturation factor RimP (194 aa).

It belongs to the RimP family.

The protein localises to the cytoplasm. Functionally, required for maturation of 30S ribosomal subunits. The protein is Ribosome maturation factor RimP of Jannaschia sp. (strain CCS1).